The sequence spans 197 residues: Cytochrome c biogenesis ATP-binding export protein CcmA (197 aa).

One can recognise an ABC transporter domain in the interval 1–196 (MSMLSLHQLQ…VIKSAQILQL (196 aa)). 35–42 (GANGSGKS) provides a ligand contact to ATP.

It belongs to the ABC transporter superfamily. CcmA exporter (TC 3.A.1.107) family. In terms of assembly, the complex is composed of two ATP-binding proteins (CcmA) and two transmembrane proteins (CcmB).

Its subcellular location is the cell inner membrane. It catalyses the reaction heme b(in) + ATP + H2O = heme b(out) + ADP + phosphate + H(+). Part of the ABC transporter complex CcmAB involved in the biogenesis of c-type cytochromes; once thought to export heme, this seems not to be the case, but its exact role is uncertain. Responsible for energy coupling to the transport system. This Rickettsia typhi (strain ATCC VR-144 / Wilmington) protein is Cytochrome c biogenesis ATP-binding export protein CcmA.